We begin with the raw amino-acid sequence, 1066 residues long: Microtubule-associated protein 1S (1066 aa).

Positions 1-804 (MAATVAGSGA…SESLPTLSDS (804 aa)) are necessary for the microtubule-organizing center localization. 2 positions are modified to phosphoserine: Ser320 and Ser472. Residues 462–707 (QDMAGPRRAE…EVDESLSVSF (246 aa)) form a disordered region. Composition is skewed to basic and acidic residues over residues 466–487 (GPRRAESKESVASRDSLRREGR) and 500–530 (GVARKDSPRTEAPRRAEKEARPSREVKKDPR). The residue at position 582 (Ser582) is a Phosphoserine. Residues 597–614 (ACSSPAPQLVATPSQESS) show a composition bias toward polar residues. At Thr647 the chain carries Phosphothreonine. Ser649, Ser660, Ser665, Ser667, Ser737, and Ser765 each carry phosphoserine. Residues 656-671 (GPTESSGPLSLSPLRG) are compositionally biased toward low complexity. Positions 676–1066 (PDASPTVTTP…EAFPACKVEF (391 aa)) are necessary for interaction with RASSF1. Positions 720-973 (EAGLSLPLCG…GGSARLVDEE (254 aa)) are necessary for association with microtubules. Residues 758–950 (PMAPAPVSPG…SRSGGSAAPP (193 aa)) form a disordered region. 2 stretches are compositionally biased toward polar residues: residues 766 to 775 (PGSSNDSSAR) and 790 to 803 (PPTSVSESLPTLSD). Position 816 is a phosphoserine (Ser816). A compositionally biased stretch (pro residues) spans 832-845 (PDPLKIPPPLPTPP). 2 stretches are compositionally biased toward low complexity: residues 880–894 (TTPPKATPVTAAKIK) and 933–949 (RGPSGSAGSRSGGSAAP). The interval 967–1066 (ARLVDEEFFR…EAFPACKVEF (100 aa)) is necessary for association with actin. The necessary for the mitochondrial aggregation and genome destruction stretch occupies residues 974–998 (FFRRVRALCYVISGQDQHKEEGMRA).

Belongs to the MAP1 family. As to quaternary structure, heterodimer of a heavy and a light chain. Interacts with microtubules and actin. Both MAP1S heavy and light chains interact with microtubules. MAP1S light chain interacts with actin. Interacts (via C-terminus) with GAN (via Kelch domains). Interacts with ESR1, LRPPRC, RASSF1, microtubules and VCY2. Interacts with ESR1, LRPPRC, RASSF1, microtubules and VCY2. Interacts with WDR47 (via N-terminus of light chain).

It is found in the nucleus. The protein resides in the cytoplasm. It localises to the cytosol. The protein localises to the cytoskeleton. Its subcellular location is the spindle. Microtubule-associated protein that mediates aggregation of mitochondria resulting in cell death and genomic destruction (MAGD). Plays a role in anchoring the microtubule organizing center to the centrosomes. Binds to DNA. Plays a role in apoptosis. Involved in the formation of microtubule bundles. The polypeptide is Microtubule-associated protein 1S (MAP1S) (Bos taurus (Bovine)).